Here is a 365-residue protein sequence, read N- to C-terminus: MSTIIVKTPVTVGLQELFREHKLSKKSVVLFDSNTRKLFGDVVLEALRAEGFQLVELVIPAREASKSFSVAYRLYGQMIEADVDRSWNLLAVGGGVVGDLGGFIAASYFRGIPVIQMPTTLLAMTDSAIGGKVAINHPLGKNLIGFFHLPELVLIDPATLASLPRREIYAGLAEVVKYGFIADANFFDMLEAHFSEVATLQEPYLTEAVKTSALIKQDVVTRDFRELDGLRATLNFGHTFAHGLEKLADYRHLRHGEAVTMGLVCALYLSHRLGFLDAPSLERGLRLLQQFVFPKNVVERYFLASNSALLLESMFSDKKKLDKKLRFVLLKELGQAFLFEESVEDSEVLAAIESAKECFRQWQQK.

NAD(+) contacts are provided by residues 95–99 (GVVGD), 119–120 (TT), lysine 132, and lysine 141. Zn(2+)-binding residues include glutamate 174, histidine 238, and histidine 255.

It belongs to the sugar phosphate cyclases superfamily. Dehydroquinate synthase family. It depends on Co(2+) as a cofactor. Requires Zn(2+) as cofactor. The cofactor is NAD(+).

Its subcellular location is the cytoplasm. It catalyses the reaction 7-phospho-2-dehydro-3-deoxy-D-arabino-heptonate = 3-dehydroquinate + phosphate. It participates in metabolic intermediate biosynthesis; chorismate biosynthesis; chorismate from D-erythrose 4-phosphate and phosphoenolpyruvate: step 2/7. Catalyzes the conversion of 3-deoxy-D-arabino-heptulosonate 7-phosphate (DAHP) to dehydroquinate (DHQ). The polypeptide is 3-dehydroquinate synthase (Chlorobium chlorochromatii (strain CaD3)).